We begin with the raw amino-acid sequence, 374 residues long: Queuine tRNA-ribosyltransferase (374 aa).

Asp-89 acts as the Proton acceptor in catalysis. Substrate is bound by residues 89 to 93, Asp-143, Gln-187, and Gly-214; that span reads DSGGF. The interval 245–251 is RNA binding; that stretch reads GVGKPED. The active-site Nucleophile is the Asp-264. The tract at residues 269 to 273 is RNA binding; important for wobble base 34 recognition; the sequence is TRNAR. 4 residues coordinate Zn(2+): Cys-302, Cys-304, Cys-307, and His-333.

Belongs to the queuine tRNA-ribosyltransferase family. As to quaternary structure, homodimer. Within each dimer, one monomer is responsible for RNA recognition and catalysis, while the other monomer binds to the replacement base PreQ1. Requires Zn(2+) as cofactor.

It carries out the reaction 7-aminomethyl-7-carbaguanine + guanosine(34) in tRNA = 7-aminomethyl-7-carbaguanosine(34) in tRNA + guanine. The protein operates within tRNA modification; tRNA-queuosine biosynthesis. Functionally, catalyzes the base-exchange of a guanine (G) residue with the queuine precursor 7-aminomethyl-7-deazaguanine (PreQ1) at position 34 (anticodon wobble position) in tRNAs with GU(N) anticodons (tRNA-Asp, -Asn, -His and -Tyr). Catalysis occurs through a double-displacement mechanism. The nucleophile active site attacks the C1' of nucleotide 34 to detach the guanine base from the RNA, forming a covalent enzyme-RNA intermediate. The proton acceptor active site deprotonates the incoming PreQ1, allowing a nucleophilic attack on the C1' of the ribose to form the product. After dissociation, two additional enzymatic reactions on the tRNA convert PreQ1 to queuine (Q), resulting in the hypermodified nucleoside queuosine (7-(((4,5-cis-dihydroxy-2-cyclopenten-1-yl)amino)methyl)-7-deazaguanosine). In Shewanella oneidensis (strain ATCC 700550 / JCM 31522 / CIP 106686 / LMG 19005 / NCIMB 14063 / MR-1), this protein is Queuine tRNA-ribosyltransferase.